Reading from the N-terminus, the 152-residue chain is Deoxyuridine 5'-triphosphate nucleotidohydrolase (152 aa).

Residues 72-74 (RSG), Asn85, and 89-91 (TVD) each bind substrate.

The protein belongs to the dUTPase family. It depends on Mg(2+) as a cofactor.

The enzyme catalyses dUTP + H2O = dUMP + diphosphate + H(+). It participates in pyrimidine metabolism; dUMP biosynthesis; dUMP from dCTP (dUTP route): step 2/2. Its function is as follows. This enzyme is involved in nucleotide metabolism: it produces dUMP, the immediate precursor of thymidine nucleotides and it decreases the intracellular concentration of dUTP so that uracil cannot be incorporated into DNA. The polypeptide is Deoxyuridine 5'-triphosphate nucleotidohydrolase (Nitrobacter winogradskyi (strain ATCC 25391 / DSM 10237 / CIP 104748 / NCIMB 11846 / Nb-255)).